We begin with the raw amino-acid sequence, 158 residues long: Transcription elongation factor GreA (158 aa).

Residues 24-43 are compositionally biased toward basic and acidic residues; that stretch reads DVERPKASEAIGEARDKGDL. The interval 24-47 is disordered; that stretch reads DVERPKASEAIGEARDKGDLSENA. Residues 48–68 are a coiled coil; that stretch reads EYDAAKEAQGLLEMKISKMEE.

It belongs to the GreA/GreB family.

In terms of biological role, necessary for efficient RNA polymerase transcription elongation past template-encoded arresting sites. The arresting sites in DNA have the property of trapping a certain fraction of elongating RNA polymerases that pass through, resulting in locked ternary complexes. Cleavage of the nascent transcript by cleavage factors such as GreA or GreB allows the resumption of elongation from the new 3'terminus. GreA releases sequences of 2 to 3 nucleotides. The chain is Transcription elongation factor GreA from Christiangramia forsetii (strain DSM 17595 / CGMCC 1.15422 / KT0803) (Gramella forsetii).